Consider the following 183-residue polypeptide: Ras-related protein Rap-2a (183 aa).

10–17 (GSGGVGKS) provides a ligand contact to GTP. An Effector region motif is present at residues 32–40 (YDPTIEDFY). Thr-35 carries a (Microbial infection) O-linked (Glc) threonine; by C.difficile toxin TcdA, and by P.sordellii toxin TcsL glycan. Residues 57-61 (DTAGT) and 116-119 (NKVD) each bind GTP. Residues Cys-176 and Cys-177 are each lipidated (S-palmitoyl cysteine). Residue Cys-180 is modified to Cysteine methyl ester. A lipid anchor (S-farnesyl cysteine) is attached at Cys-180. A propeptide spans 181 to 183 (NIQ) (removed in mature form).

It belongs to the small GTPase superfamily. Ras family. In terms of assembly, interacts (GTP-bound form) with RUNDC3A. Interacts with RGS14; the interaction is GTP-dependent. Interacts with PLCE1. Interacts with ARHGAP29, SGSM1, SGSM2 and SGSM3. Interacts (GTP-bound form preferentially) with TNIK (via the CNH domain); the interaction is direct and recruits RAP2A to the E3 ubiquitin ligase NEDD4. Interacts with MINK1. Interacts (GTP-bound form preferentially) with MAP4K4. Interacts with cytoskeletal actin. Ubiquitinated; undergoes 'Lys-63' monoubiquitination and diubiquitination by NEDD4. Multiple lysine residues are probably modified. Ubiquitination requires TNIK, prevents interaction with effectors and inactivates RAP2A. Ubiquitination by the ECS(RAB40B) complex leads to RAP2A localization to lamellipodia plasma membrane, activation, and regulation of sorting at early endosomes for recycling to the lamellipodia plasma membrane. Post-translationally, palmitoylated. Palmitoylation is required for association with recycling endosome membranes and activation of TNIK. In terms of processing, (Microbial infection) Glucosylated at Thr-35 by C.difficile toxin TcdA in the colonic epithelium, and by P.sordellii toxin TcsL in the vascular endothelium.

It is found in the midbody. It localises to the cell projection. The protein resides in the lamellipodium membrane. The protein localises to the golgi apparatus. Its subcellular location is the recycling endosome membrane. It is found in the lysosome. It catalyses the reaction GTP + H2O = GDP + phosphate + H(+). With respect to regulation, activated by the guanine nucleotide-exchange factors RAPGEF3 and RAPGEF4 in a cAMP-dependent manner. Nucleotide exchange is also specifically stimulated by RAPGEF5, RASGEF1A and RASGEF1B. Its function is as follows. Small GTP-binding protein which cycles between a GDP-bound inactive and a GTP-bound active form. In its active form interacts with and regulates several effectors including MAP4K4, MINK1 and TNIK. Part of a signaling complex composed of NEDD4, RAP2A and TNIK which regulates neuronal dendrite extension and arborization during development. More generally, it is part of several signaling cascades and regulates cytoskeletal rearrangements, cell migration, cell adhesion and cell spreading. This is Ras-related protein Rap-2a from Homo sapiens (Human).